A 369-amino-acid polypeptide reads, in one-letter code: Anhydro-N-acetylmuramic acid kinase (369 aa).

Residue 12–19 (GTSMDGVD) coordinates ATP.

This sequence belongs to the anhydro-N-acetylmuramic acid kinase family.

The catalysed reaction is 1,6-anhydro-N-acetyl-beta-muramate + ATP + H2O = N-acetyl-D-muramate 6-phosphate + ADP + H(+). It functions in the pathway amino-sugar metabolism; 1,6-anhydro-N-acetylmuramate degradation. It participates in cell wall biogenesis; peptidoglycan recycling. In terms of biological role, catalyzes the specific phosphorylation of 1,6-anhydro-N-acetylmuramic acid (anhMurNAc) with the simultaneous cleavage of the 1,6-anhydro ring, generating MurNAc-6-P. Is required for the utilization of anhMurNAc either imported from the medium or derived from its own cell wall murein, and thus plays a role in cell wall recycling. This is Anhydro-N-acetylmuramic acid kinase from Shewanella halifaxensis (strain HAW-EB4).